Here is a 579-residue protein sequence, read N- to C-terminus: Glypican-2 (579 aa).

Positions 1 to 21 (MSALRPLLLLLLHLCPGLGPG) are cleaved as a signal peptide. Residues Ser55, Ser92, and Ser155 are each glycosylated (O-linked (Xyl...) (heparan sulfate) serine). 2 disordered regions span residues 347 to 382 (GTPHPVQSRSRRAPAPREEASRSWRASAEEERPTTA) and 483 to 552 (ALGQ…GRSR). The segment covering 361 to 379 (APREEASRSWRASAEEERP) has biased composition (basic and acidic residues). Residues Ser498 and Ser500 are each glycosylated (O-linked (Xyl...) (heparan sulfate) serine). Positions 517–527 (VVPPARPPRPP) are enriched in pro residues. The GPI-anchor amidated serine moiety is linked to residue Ser556. A propeptide spans 557 to 579 (SVGLHTPLVLLLLPSALTLLVLR) (removed in mature form).

This sequence belongs to the glypican family. In terms of assembly, interacts (via heparan sulfate) with PTN; this interaction promotes neurite outgrowth through binding of PTN with chondroitin sulfate of proteoglycans, thereby releasing PTPRS of chondroitin sulfate proteoglycans (CSPGs) and leading to binding with heparan sulfate of GPC2. Interacts (heparan sulfate chain) with MDK; this interaction is inhibited by heparin followed by chondroitin sulfate E; this interaction induces GPC2 clustering through heparan sulfate chain; this interaction induces neuronal cell adhesion and neurite outgrowth.

It localises to the cell membrane. Its subcellular location is the secreted. The protein localises to the extracellular space. Functionally, cell surface proteoglycan that bears heparan sulfate. May fulfill a function related to the motile behaviors of developing neurons. The protein is Glypican-2 (Gpc2) of Mus musculus (Mouse).